A 248-amino-acid polypeptide reads, in one-letter code: Protein LIFEGUARD 3 (248 aa).

Helical transmembrane passes span 42–62 (VYSI…TVVT), 74–94 (GLGL…LCPL), 105–125 (YLLL…TCAF), 130–150 (VILE…LYTF), 165–185 (FLFG…LFPL), 188–208 (VSVM…IVYD), and 222–242 (IWAA…LLTV).

Belongs to the BI1 family.

The protein localises to the membrane. This is Protein LIFEGUARD 3 from Arabidopsis thaliana (Mouse-ear cress).